A 95-amino-acid chain; its full sequence is Large ribosomal subunit protein bL25 (95 aa).

This sequence belongs to the bacterial ribosomal protein bL25 family. As to quaternary structure, part of the 50S ribosomal subunit; part of the 5S rRNA/L5/L18/L25 subcomplex. Contacts the 5S rRNA. Binds to the 5S rRNA independently of L5 and L18.

This is one of the proteins that binds to the 5S RNA in the ribosome where it forms part of the central protuberance. The protein is Large ribosomal subunit protein bL25 of Shewanella baltica (strain OS223).